The chain runs to 389 residues: Apoptosis inhibitor U19 (389 aa).

This sequence belongs to the beta-herpesvirinae UL38 protein family. As to quaternary structure, interacts with host MDM2; this interaction leads to the stabilization of host TP53.

The protein localises to the host cytoplasm. It localises to the host nucleus. In terms of biological role, plays a role in the inhibition of host apoptosis to facilitate efficient viral replication. Promotes stabilization and inactivation of host TP53 through interaction with host MDM2. This Human herpesvirus 6A (strain Uganda-1102) (HHV-6 variant A) protein is Apoptosis inhibitor U19 (U19).